Here is a 261-residue protein sequence, read N- to C-terminus: Pyridoxine-5'-phosphate oxidase (261 aa).

A pyridoxal 5'-phosphate-binding site is contributed by 42-45 (RGDR). 95-98 (RMLL) is an FMN binding site. Residue Lys100 coordinates pyridoxal 5'-phosphate. FMN-binding positions include 110-111 (FT), 116-117 (RK), and Gln139. Pyridoxal 5'-phosphate contacts are provided by Tyr157, Arg161, and Ser165. Residues 174-175 (QS) and Trp219 contribute to the FMN site. 225 to 227 (RLH) provides a ligand contact to pyridoxal 5'-phosphate. Arg229 contributes to the FMN binding site. Thr238 carries the phosphothreonine modification. Residue Ser241 is modified to Phosphoserine.

The protein belongs to the pyridoxamine 5'-phosphate oxidase family. Homodimer. It depends on FMN as a cofactor. In terms of tissue distribution, detected in adult liver.

It catalyses the reaction pyridoxamine 5'-phosphate + O2 + H2O = pyridoxal 5'-phosphate + H2O2 + NH4(+). It carries out the reaction pyridoxine 5'-phosphate + O2 = pyridoxal 5'-phosphate + H2O2. It participates in cofactor metabolism; pyridoxal 5'-phosphate salvage; pyridoxal 5'-phosphate from pyridoxamine 5'-phosphate: step 1/1. The protein operates within cofactor metabolism; pyridoxal 5'-phosphate salvage; pyridoxal 5'-phosphate from pyridoxine 5'-phosphate: step 1/1. Functionally, catalyzes the oxidation of either pyridoxine 5'-phosphate (PNP) or pyridoxamine 5'-phosphate (PMP) into pyridoxal 5'-phosphate (PLP). This is Pyridoxine-5'-phosphate oxidase (Pnpo) from Rattus norvegicus (Rat).